The following is a 185-amino-acid chain: Elongation factor P (185 aa).

It belongs to the elongation factor P family.

Its subcellular location is the cytoplasm. It functions in the pathway protein biosynthesis; polypeptide chain elongation. Its function is as follows. Involved in peptide bond synthesis. Stimulates efficient translation and peptide-bond synthesis on native or reconstituted 70S ribosomes in vitro. Probably functions indirectly by altering the affinity of the ribosome for aminoacyl-tRNA, thus increasing their reactivity as acceptors for peptidyl transferase. The polypeptide is Elongation factor P (Herpetosiphon aurantiacus (strain ATCC 23779 / DSM 785 / 114-95)).